The following is a 97-amino-acid chain: Acylphosphatase (97 aa).

Residues 9–95 (TRHLRIHGLV…CDAQGFEQRE (87 aa)) enclose the Acylphosphatase-like domain. Residues R24 and N42 contribute to the active site.

This sequence belongs to the acylphosphatase family.

The catalysed reaction is an acyl phosphate + H2O = a carboxylate + phosphate + H(+). This is Acylphosphatase (acyP) from Acidovorax sp. (strain JS42).